A 433-amino-acid polypeptide reads, in one-letter code: GTPase Der (433 aa).

EngA-type G domains follow at residues 5–167 (KKVL…GEVG) and 174–349 (IKVG…DQLE). Residues 11-18 (GRPNVGKS), 58-62 (DTGGF), 119-122 (NKVD), 180-187 (GKPNSGKS), 227-231 (DTAGI), and 292-295 (SKWD) each bind GTP. One can recognise a KH-like domain in the interval 349-429 (ELKTSTPDLN…PILVELKEKI (81 aa)).

The protein belongs to the TRAFAC class TrmE-Era-EngA-EngB-Septin-like GTPase superfamily. EngA (Der) GTPase family. In terms of assembly, associates with the 50S ribosomal subunit.

In terms of biological role, GTPase that plays an essential role in the late steps of ribosome biogenesis. The protein is GTPase Der of Borreliella burgdorferi (strain ATCC 35210 / DSM 4680 / CIP 102532 / B31) (Borrelia burgdorferi).